The primary structure comprises 380 residues: Cytochrome b (380 aa).

The next 4 membrane-spanning stretches (helical) occupy residues 34 to 54 (FGSL…LLAM), 78 to 99 (WLIR…FLHI), 114 to 134 (WNTG…GYVL), and 179 to 199 (FFAL…IHLT). 2 residues coordinate heme b: H84 and H98. Residues H183 and H197 each contribute to the heme b site. An a ubiquinone-binding site is contributed by H202. A run of 4 helical transmembrane segments spans residues 227-247 (IKDI…ALFS), 289-309 (LGGV…PFLH), 321-341 (LSQT…WIGS), and 348-368 (FIII…ILFP).

This sequence belongs to the cytochrome b family. In terms of assembly, the cytochrome bc1 complex contains 11 subunits: 3 respiratory subunits (MT-CYB, CYC1 and UQCRFS1), 2 core proteins (UQCRC1 and UQCRC2) and 6 low-molecular weight proteins (UQCRH/QCR6, UQCRB/QCR7, UQCRQ/QCR8, UQCR10/QCR9, UQCR11/QCR10 and a cleavage product of UQCRFS1). This cytochrome bc1 complex then forms a dimer. It depends on heme b as a cofactor.

The protein localises to the mitochondrion inner membrane. Its function is as follows. Component of the ubiquinol-cytochrome c reductase complex (complex III or cytochrome b-c1 complex) that is part of the mitochondrial respiratory chain. The b-c1 complex mediates electron transfer from ubiquinol to cytochrome c. Contributes to the generation of a proton gradient across the mitochondrial membrane that is then used for ATP synthesis. The sequence is that of Cytochrome b (MT-CYB) from Alectoris chukar (Chukar partridge).